The chain runs to 449 residues: Glucose-6-phosphate isomerase (449 aa).

Glutamate 291 serves as the catalytic Proton donor. Active-site residues include histidine 312 and lysine 426.

It belongs to the GPI family.

Its subcellular location is the cytoplasm. The enzyme catalyses alpha-D-glucose 6-phosphate = beta-D-fructose 6-phosphate. It participates in carbohydrate biosynthesis; gluconeogenesis. Its pathway is carbohydrate degradation; glycolysis; D-glyceraldehyde 3-phosphate and glycerone phosphate from D-glucose: step 2/4. Catalyzes the reversible isomerization of glucose-6-phosphate to fructose-6-phosphate. This is Glucose-6-phosphate isomerase from Streptococcus pyogenes serotype M49 (strain NZ131).